We begin with the raw amino-acid sequence, 246 residues long: uncharacterized protein (246 aa).

The segment at 120 to 149 is disordered; sequence EKCAGETSPYTSASVSNSKKATSSSNFTKS. Residues 130–149 are compositionally biased toward low complexity; it reads TSASVSNSKKATSSSNFTKS.

This is an uncharacterized protein from Caenorhabditis elegans.